The chain runs to 185 residues: Large ribosomal subunit protein bL25 (185 aa).

Belongs to the bacterial ribosomal protein bL25 family. CTC subfamily. Part of the 50S ribosomal subunit; part of the 5S rRNA/L5/L18/L25 subcomplex. Contacts the 5S rRNA. Binds to the 5S rRNA independently of L5 and L18.

Its function is as follows. This is one of the proteins that binds to the 5S RNA in the ribosome where it forms part of the central protuberance. The sequence is that of Large ribosomal subunit protein bL25 from Chlamydia muridarum (strain MoPn / Nigg).